We begin with the raw amino-acid sequence, 236 residues long: tRNA (guanine-N(7)-)-methyltransferase (236 aa).

The S-adenosyl-L-methionine site is built by Asp35, Glu60, Asn87, and Asp113. Asp113 is a catalytic residue. Residues Lys117 and Asp149 each coordinate substrate.

The protein belongs to the class I-like SAM-binding methyltransferase superfamily. TrmB family.

The enzyme catalyses guanosine(46) in tRNA + S-adenosyl-L-methionine = N(7)-methylguanosine(46) in tRNA + S-adenosyl-L-homocysteine. Its pathway is tRNA modification; N(7)-methylguanine-tRNA biosynthesis. Functionally, catalyzes the formation of N(7)-methylguanine at position 46 (m7G46) in tRNA. The sequence is that of tRNA (guanine-N(7)-)-methyltransferase from Prochlorococcus marinus (strain MIT 9313).